Consider the following 321-residue polypeptide: Fe-S cluster assembly protein DRE2 (321 aa).

The interval 1–161 (MPAPVPPTAF…STPVTLSGAR (161 aa)) is N-terminal SAM-like domain. Positions 123-168 (PSPSTLAYTSPSAPSLPTVASDPSPAPSSSTPVTLSGARPLQLRRN) are disordered. Low complexity predominate over residues 139 to 156 (PTVASDPSPAPSSSTPVT). A linker region spans residues 162–197 (PLQLRRNGDKARKAALWAIDSPLIPDGGKSLLTPAD). Residues Cys203, Cys219, Cys222, and Cys224 each contribute to the [2Fe-2S] cluster site. A fe-S binding site A region spans residues 203-224 (CVFPAENGKPVKRRRACKDCTC). [4Fe-4S] cluster-binding residues include Cys285, Cys288, Cys296, and Cys299. Short sequence motifs (cx2C motif) lie at residues 285–288 (CGSC) and 296–299 (CSSC). Positions 285–299 (CGSCYLGDAFRCSSC) are fe-S binding site B.

The protein belongs to the anamorsin family. As to quaternary structure, monomer. Interacts with TAH18. Interacts with MIA40. Requires [2Fe-2S] cluster as cofactor. It depends on [4Fe-4S] cluster as a cofactor.

It localises to the cytoplasm. Its subcellular location is the mitochondrion intermembrane space. Its function is as follows. Component of the cytosolic iron-sulfur (Fe-S) protein assembly (CIA) machinery required for the maturation of extramitochondrial Fe-S proteins. Part of an electron transfer chain functioning in an early step of cytosolic Fe-S biogenesis, facilitating the de novo assembly of a [4Fe-4S] cluster on the scaffold complex CFD1-NBP35. Electrons are transferred to DRE2 from NADPH via the FAD- and FMN-containing protein TAH18. TAH18-DRE2 are also required for the assembly of the diferric tyrosyl radical cofactor of ribonucleotide reductase (RNR), probably by providing electrons for reduction during radical cofactor maturation in the catalytic small subunit RNR2. This is Fe-S cluster assembly protein DRE2 from Cryptococcus neoformans var. neoformans serotype D (strain B-3501A) (Filobasidiella neoformans).